The sequence spans 450 residues: UDP-N-acetylmuramoylalanine--D-glutamate ligase (450 aa).

119–125 (GSNGKTT) contacts ATP.

This sequence belongs to the MurCDEF family.

The protein localises to the cytoplasm. It carries out the reaction UDP-N-acetyl-alpha-D-muramoyl-L-alanine + D-glutamate + ATP = UDP-N-acetyl-alpha-D-muramoyl-L-alanyl-D-glutamate + ADP + phosphate + H(+). Its pathway is cell wall biogenesis; peptidoglycan biosynthesis. Its function is as follows. Cell wall formation. Catalyzes the addition of glutamate to the nucleotide precursor UDP-N-acetylmuramoyl-L-alanine (UMA). The polypeptide is UDP-N-acetylmuramoylalanine--D-glutamate ligase (Streptococcus pneumoniae (strain JJA)).